The sequence spans 487 residues: 2-aminomuconic semialdehyde dehydrogenase (487 aa).

231–236 (GSQPTA) lines the NAD(+) pocket. Glutamate 253 functions as the Proton acceptor in the catalytic mechanism. Cysteine 287 serves as the catalytic Nucleophile.

Belongs to the aldehyde dehydrogenase family.

It is found in the cytoplasm. The catalysed reaction is 2-aminomuconate 6-semialdehyde + NAD(+) + H2O = (2Z,4E)-2-aminomuconate + NADH + 2 H(+). It functions in the pathway amino-acid degradation; L-kynurenine degradation. Its function is as follows. Catalyzes the NAD-dependent oxidation of 2-aminomuconic semialdehyde of the kynurenine metabolic pathway in L-tryptophan degradation. In Bos taurus (Bovine), this protein is 2-aminomuconic semialdehyde dehydrogenase (ALDH8A1).